Consider the following 470-residue polypeptide: Glutamate--tRNA ligase (470 aa).

The 'HIGH' region motif lies at 9 to 19 (PSPTGFLHVGG). Residues 236-240 (RLSKR) carry the 'KMSKS' region motif. Lys-239 is a binding site for ATP.

It belongs to the class-I aminoacyl-tRNA synthetase family. Glutamate--tRNA ligase type 1 subfamily. As to quaternary structure, monomer.

The protein resides in the cytoplasm. The enzyme catalyses tRNA(Glu) + L-glutamate + ATP = L-glutamyl-tRNA(Glu) + AMP + diphosphate. Catalyzes the attachment of glutamate to tRNA(Glu) in a two-step reaction: glutamate is first activated by ATP to form Glu-AMP and then transferred to the acceptor end of tRNA(Glu). The protein is Glutamate--tRNA ligase of Legionella pneumophila (strain Paris).